The primary structure comprises 90 residues: Small ribosomal subunit protein bS16 (90 aa).

It belongs to the bacterial ribosomal protein bS16 family.

This Bacillus anthracis (strain A0248) protein is Small ribosomal subunit protein bS16.